We begin with the raw amino-acid sequence, 958 residues long: SLIT and NTRK-like protein 5 (958 aa).

The first 40 residues, 1–40 (MHTCCPPVTLEQDLHRKMHSWMLQTLAFAVTSLVLSCAET), serve as a signal peptide directing secretion. At 41–664 (IDYYGEICDN…GGGASSVPLS (624 aa)) the chain is on the extracellular side. LRR repeat units follow at residues 82–103 (PIYH…EFVN), 106–127 (GASI…AFHG), 130–151 (GLRR…TFLG), 154–175 (NLEY…AFGK), 178–199 (LLQV…LFRF), and 201–222 (PLTH…GLLQ). Residue Asn-103 is glycosylated (N-linked (GlcNAc...) asparagine). Residues 235-286 (NPWNCSCELISLKDWLDSISYSALVGDVVCETPFRLHGRDLDEVSKQELCPR) enclose the LRRCT 1 domain. A disordered region spans residues 317–358 (ATSSSAVYKPPLKPPKGTRQPNKPRVRPTSRQPSKDLGYSNY). The LRRNT domain occupies 365–407 (QTKSPVPLECPTACSCNLQISDLGLNVNCQERKIESIAELQPK). LRR repeat units follow at residues 410–431 (NPKK…DFLE), 434–455 (GLDL…AFGD), 458–479 (NLRR…LFYG), 482–503 (SLQY…TFDP), 506–527 (NLQL…VFSG), and 529–550 (TLLR…GVLD). The LRRCT 2 domain maps to 563 to 614 (NPWDCTCDIVGMKLWVEQLKVGVLVDEVICKAPKKFAETDMRSIKSELLCPD). Residue Asn-644 is glycosylated (N-linked (GlcNAc...) asparagine). A helical transmembrane segment spans residues 665-685 (VLILSLLLVFIMSVFVAAGLF). Topologically, residues 686–958 (VLVMKRRKKN…LEKQTTFSQF (273 aa)) are cytoplasmic. The tract at residues 789 to 844 (NHHLQQQQQPPPPPQQPQQQPPPQLQLQPGEEERRESHHLRSPAYSVSTIEPREDL) is disordered. Residues 797–812 (QPPPPPQQPQQQPPPQ) show a composition bias toward pro residues.

The protein belongs to the SLITRK family. As to expression, expressed predominantly in the cerebral cortex of the brain but also at low levels in the spinal cord and medulla.

The protein localises to the membrane. Its function is as follows. Suppresses neurite outgrowth. The protein is SLIT and NTRK-like protein 5 (SLITRK5) of Homo sapiens (Human).